Reading from the N-terminus, the 305-residue chain is Heterogeneous nuclear ribonucleoprotein A0 (305 aa).

Met-1 carries the post-translational modification N-acetylmethionine. An RRM 1 domain is found at 7-86; the sequence is CKLFIGGLNV…VELKRAVSRE (80 aa). Position 68 is a phosphoserine (Ser-68). Lys-80 is covalently cross-linked (Glycyl lysine isopeptide (Lys-Gly) (interchain with G-Cter in SUMO2)). Ser-84 bears the Phosphoserine; by MAPKAPK2 mark. Glycyl lysine isopeptide (Lys-Gly) (interchain with G-Cter in SUMO2) cross-links involve residues Lys-96, Lys-98, Lys-99, and Lys-106. The region spanning 98-175 is the RRM 2 domain; that stretch reads KKLFVGGLKG…HRVEVKKAVP (78 aa). Lys-133 bears the N6-acetyllysine mark. Arg-139 is modified (omega-N-methylarginine). Glycyl lysine isopeptide (Lys-Gly) (interchain with G-Cter in SUMO2) cross-links involve residues Lys-154, Lys-159, Lys-172, and Lys-176. Disordered stretches follow at residues 174 to 214 and 262 to 305; these read VPKE…KGGG and QSSY…GSSF. Composition is skewed to gly residues over residues 181 to 200 and 269 to 281; these read SGGG…GRGR and KSGG…GSSW. Phosphoserine is present on Ser-188. Arg-284 carries the omega-N-methylarginine modification. Gly residues predominate over residues 290–305; that stretch reads YRGGYGGGGGYGGSSF. At Arg-291 the chain carries Asymmetric dimethylarginine; alternate. Arg-291 bears the Dimethylated arginine; alternate mark. Residue Arg-291 is modified to Omega-N-methylarginine; alternate.

In terms of processing, phosphorylated at Ser-84 by MAPKAPK2 in response to LPS treatment, promoting stabilization of GADD45A mRNA. Post-translationally, arg-291 is dimethylated, probably to asymmetric dimethylarginine.

The protein localises to the nucleus. Functionally, mRNA-binding component of ribonucleosomes. Specifically binds AU-rich element (ARE)-containing mRNAs. Involved in post-transcriptional regulation of cytokines mRNAs. This is Heterogeneous nuclear ribonucleoprotein A0 (HNRNPA0) from Homo sapiens (Human).